A 215-amino-acid polypeptide reads, in one-letter code: Large ribosomal subunit protein uL3 (215 aa).

Glutamine 151 carries the N5-methylglutamine modification.

The protein belongs to the universal ribosomal protein uL3 family. In terms of assembly, part of the 50S ribosomal subunit. Forms a cluster with proteins L14 and L19. Post-translationally, methylated by PrmB.

In terms of biological role, one of the primary rRNA binding proteins, it binds directly near the 3'-end of the 23S rRNA, where it nucleates assembly of the 50S subunit. This is Large ribosomal subunit protein uL3 from Rickettsia massiliae (strain Mtu5).